The chain runs to 1601 residues: Polycomb group protein Psc (1601 aa).

2 disordered regions span residues 1–91 (MMTP…TTTT) and 165–245 (NGIK…DLAT). 2 stretches are compositionally biased toward low complexity: residues 8–91 (AIQP…TTTT) and 182–198 (SSSS…SSSS). Polar residues predominate over residues 199-215 (WPTTRRATSEDASSNGG). A compositionally biased stretch (low complexity) spans 228–245 (TAAVAASSTATTTSDLAT). The segment at 263–302 (CHLCQGYLINATTIVECLHSFCHSCLINHLRKERFCPRCE) adopts an RING-type zinc-finger fold. 7 disordered regions span residues 561-693 (KREK…FSED), 711-856 (VESP…NRTP), 895-960 (IGGG…SNNY), 1011-1097 (YKYT…EKQQ), 1116-1315 (SITI…LAPK), 1330-1408 (NPAA…HPVM), and 1512-1601 (AATG…TKSK). Residues 567 to 590 (SPQMSSKSSSKSSPCTPVSSPSEP) are compositionally biased toward low complexity. Over residues 611–637 (DPERREIVKPLKPEKESRSKKKDKDGS) the composition is skewed to basic and acidic residues. The segment covering 638-649 (PKSSSSSSSSSS) has biased composition (low complexity). 2 positions are modified to phosphoserine: Ser-656 and Ser-658. The span at 676 to 689 (SGVSTLSPRVTSGA) shows a compositional bias: polar residues. Over residues 729–739 (SVQQSASPKSK) the composition is skewed to low complexity. The span at 812–822 (LMPPPAKPPML) shows a compositional bias: pro residues. A compositionally biased stretch (polar residues) spans 929–938 (TTPSQGNKNV). Low complexity predominate over residues 1011–1022 (YKYTPKPTPNSG). The span at 1036–1045 (LGGGNGGSLG) shows a compositional bias: gly residues. Residues 1069 to 1085 (SSATQSGGNNGIVNNNI) show a composition bias toward low complexity. Residues 1116–1133 (SITISRDNGDSSSPNNGQ) show a composition bias toward polar residues. Phosphoserine is present on Ser-1139. Residues 1204 to 1217 (PQLPKVATPPPPSS) show a composition bias toward pro residues. Phosphothreonine is present on residues Thr-1222, Thr-1236, and Thr-1251. A compositionally biased stretch (basic and acidic residues) spans 1247 to 1258 (VDKKTPSPEKRT). A phosphoserine mark is found at Ser-1253, Ser-1266, and Ser-1274. Residues 1261–1272 (QMGSHSPTASEN) are compositionally biased toward polar residues. Polar residues-rich tracts occupy residues 1352–1375 (QSGQ…SPPA) and 1561–1587 (APQT…NNGA).

In terms of assembly, component of PRC1 complex, which contains many PcG proteins like Pc, ph, Scm, Psc, Sce and also chromatin-remodeling proteins such as histone deacetylases. This complex is distinct from the Esc/E(z) complex, at least composed of esc, E(z), Su(z)12, HDAC1/Rpd3 and Caf1-55. The 2 complexes however cooperate and interact together during the first 3 hours of development to establish PcG silencing.

The protein resides in the nucleus. Functionally, polycomb group (PcG) protein. PcG proteins act by forming multiprotein complexes, which are required to maintain the transcriptionally repressive state of homeotic genes throughout development. PcG proteins are not required to initiate repression, but to maintain it during later stages of development. Component of the PcG multiprotein PRC1 complex, a complex that acts via chromatin remodeling and modification of histones; it mediates monoubiquitination of histone H2A 'Lys-118', rendering chromatin heritably changed in its expressibility. Needed to maintain expression patterns of the homeotic selector genes of the Antennapedia (Antp-C) and Bithorax (BX-C) complexes, and hence for the maintenance of segmental determination. This chain is Polycomb group protein Psc (Psc), found in Drosophila melanogaster (Fruit fly).